The primary structure comprises 105 residues: ATP synthase subunit c (105 aa).

The next 3 helical transmembrane spans lie at 3–23, 32–52, and 78–98; these read FLAL…GGMG, SILG…IGMG, and VAMA…IIAI.

The protein belongs to the ATPase C chain family. As to quaternary structure, F-type ATPases have 2 components, F(1) - the catalytic core - and F(0) - the membrane proton channel. F(1) has five subunits: alpha(3), beta(3), gamma(1), delta(1), epsilon(1). F(0) has three main subunits: a(1), b(2) and c(10-14). The alpha and beta chains form an alternating ring which encloses part of the gamma chain. F(1) is attached to F(0) by a central stalk formed by the gamma and epsilon chains, while a peripheral stalk is formed by the delta and b chains.

It localises to the cell inner membrane. In terms of biological role, f(1)F(0) ATP synthase produces ATP from ADP in the presence of a proton or sodium gradient. F-type ATPases consist of two structural domains, F(1) containing the extramembraneous catalytic core and F(0) containing the membrane proton channel, linked together by a central stalk and a peripheral stalk. During catalysis, ATP synthesis in the catalytic domain of F(1) is coupled via a rotary mechanism of the central stalk subunits to proton translocation. Its function is as follows. Key component of the F(0) channel; it plays a direct role in translocation across the membrane. A homomeric c-ring of between 10-14 subunits forms the central stalk rotor element with the F(1) delta and epsilon subunits. In Helicobacter pylori (strain P12), this protein is ATP synthase subunit c.